A 510-amino-acid chain; its full sequence is Flavonoid 3',5'-hydroxylase (510 aa).

C447 contributes to the heme binding site.

This sequence belongs to the cytochrome P450 family. The cofactor is heme.

It carries out the reaction a 3',5'-unsubstituted flavanone + 2 reduced [NADPH--hemoprotein reductase] + 2 O2 = a 3',5'-dihydroxyflavanone + 2 oxidized [NADPH--hemoprotein reductase] + 2 H2O + 2 H(+). It functions in the pathway pigment biosynthesis; anthocyanin biosynthesis. In terms of biological role, catalyzes the 3'5'-hydroxylation of naringenin and eriodictyol to form 5,7,3,'4',5'-pentahydroxyflavanone and 3',5'-hydroxylation of dihydrokaempferol and dihydroquercetin to form dihydromyricetin. The sequence is that of Flavonoid 3',5'-hydroxylase (CYP75A7) from Eustoma exaltatum subsp. russellianum (Bluebells).